The following is a 569-amino-acid chain: Proline--tRNA ligase (569 aa).

Belongs to the class-II aminoacyl-tRNA synthetase family. ProS type 1 subfamily. Homodimer.

It is found in the cytoplasm. It catalyses the reaction tRNA(Pro) + L-proline + ATP = L-prolyl-tRNA(Pro) + AMP + diphosphate. Functionally, catalyzes the attachment of proline to tRNA(Pro) in a two-step reaction: proline is first activated by ATP to form Pro-AMP and then transferred to the acceptor end of tRNA(Pro). As ProRS can inadvertently accommodate and process non-cognate amino acids such as alanine and cysteine, to avoid such errors it has two additional distinct editing activities against alanine. One activity is designated as 'pretransfer' editing and involves the tRNA(Pro)-independent hydrolysis of activated Ala-AMP. The other activity is designated 'posttransfer' editing and involves deacylation of mischarged Ala-tRNA(Pro). The misacylated Cys-tRNA(Pro) is not edited by ProRS. This chain is Proline--tRNA ligase, found in Nitrosospira multiformis (strain ATCC 25196 / NCIMB 11849 / C 71).